A 143-amino-acid chain; its full sequence is Deoxyuridine 5'-triphosphate nucleotidohydrolase (143 aa).

DUMP contacts are provided by S65, V78, R132, and G138.

This sequence belongs to the dUTPase family. Homotrimer. The cofactor is Mg(2+).

The catalysed reaction is dUTP + H2O = dUMP + diphosphate + H(+). It functions in the pathway pyrimidine metabolism; dUMP biosynthesis; dUMP from dCTP (dUTP route): step 2/2. In terms of biological role, involved in nucleotide metabolism via production of dUMP, the immediate precursor of thymidine nucleotides, and decreases the intracellular concentration of dUTP so that uracil cannot be incorporated into DNA. This is Deoxyuridine 5'-triphosphate nucleotidohydrolase (DUT1) from Antonospora locustae (Microsporidian parasite).